The primary structure comprises 211 residues: HTH-type transcriptional regulator AlkX (211 aa).

The HTH tetR-type domain maps to 22-82; the sequence is ALLRDSVLDA…GYALRLADRL (61 aa). A DNA-binding region (H-T-H motif) is located at residues 45–64; that stretch reads TLSDVARAAGISRQTIYNEF.

In terms of assembly, homodimer.

It is found in the cytoplasm. Its activity is regulated as follows. DNA-binding activity may be regulated by fatty acids. In terms of biological role, represses the expression of the alkB-rubAB operon, which encodes the alkane hydroxylase AlkB and the rubredoxins RubA and RubB. Acts by binding to the promoter region of the operon. In addition, EMSA analysis show that AlkX can bind to the promoter region of mmpS1 and mmpL3 and to the intragenic region of mmpL11, suggesting that it may participate in the regulatory network that controls the expression of MmpL lipid transporters. This chain is HTH-type transcriptional regulator AlkX, found in Mycobacterium tuberculosis (strain ATCC 25618 / H37Rv).